A 572-amino-acid polypeptide reads, in one-letter code: Urease subunit alpha (572 aa).

One can recognise a Urease domain in the interval 136–572 (GGIDTHIHWI…VPLAQRYFLF (437 aa)). Residues His-141, His-143, and Lys-224 each coordinate Ni(2+). Lys-224 carries the N6-carboxylysine modification. His-226 serves as a coordination point for substrate. Ni(2+)-binding residues include His-253 and His-279. The active-site Proton donor is the His-327. Asp-367 provides a ligand contact to Ni(2+).

The protein belongs to the metallo-dependent hydrolases superfamily. Urease alpha subunit family. Heterotrimer of UreA (gamma), UreB (beta) and UreC (alpha) subunits. Three heterotrimers associate to form the active enzyme. It depends on Ni cation as a cofactor. Post-translationally, carboxylation allows a single lysine to coordinate two nickel ions.

Its subcellular location is the cytoplasm. The enzyme catalyses urea + 2 H2O + H(+) = hydrogencarbonate + 2 NH4(+). Its pathway is nitrogen metabolism; urea degradation; CO(2) and NH(3) from urea (urease route): step 1/1. The chain is Urease subunit alpha from Actinobacillus pleuropneumoniae serotype 3 (strain JL03).